The following is a 265-amino-acid chain: MKRIAIYGKGGIGKSTIVSNMAAAYSSEHRVLVIGCDPKADTTRTLYGERLPTVLDVLKENREPDVSEVIHTGFGGVRCVESGGPEPGVGCAGRGVIVAMNLLERLGVFREDIDVVIYDVLGDVVCGGFAVPLREDFADEVYIVTSGEYMSLYAANNIARGIRKLKGKLGGVICNCRGIRDEVEIVSEFASRIGSRLIGAVPRSNLVQESELEARTVIERFPESEQASVYRKLAEDIYRNTEFTVPEPMDQEEFEEFFRKFRVEG.

8-15 (GKGGIGKS) contacts ATP. Cys91 contributes to the [4Fe-4S] cluster binding site. An ADP-ribosylarginine; by dinitrogenase reductase ADP-ribosyltransferase modification is found at Arg94. Cys126 contacts [4Fe-4S] cluster.

The protein belongs to the NifH/BchL/ChlL family. In terms of assembly, homodimer. [4Fe-4S] cluster is required as a cofactor. The reversible ADP-ribosylation of Arg-94 inactivates the nitrogenase reductase and regulates nitrogenase activity.

The enzyme catalyses N2 + 8 reduced [2Fe-2S]-[ferredoxin] + 16 ATP + 16 H2O = H2 + 8 oxidized [2Fe-2S]-[ferredoxin] + 2 NH4(+) + 16 ADP + 16 phosphate + 6 H(+). In terms of biological role, the key enzymatic reactions in nitrogen fixation are catalyzed by the nitrogenase complex, which has 2 components: the iron protein and the molybdenum-iron protein. This chain is Nitrogenase iron protein 2 (nifH2), found in Methanothermobacter thermautotrophicus (strain ATCC 29096 / DSM 1053 / JCM 10044 / NBRC 100330 / Delta H) (Methanobacterium thermoautotrophicum).